The chain runs to 301 residues: Pseudouridine-5'-phosphate glycosidase (301 aa).

Residue E25 is the Proton donor of the active site. Residues K86 and V106 each coordinate substrate. D138 is a binding site for Mn(2+). 140–142 contacts substrate; that stretch reads SAD. The active-site Nucleophile is the K159.

It belongs to the pseudouridine-5'-phosphate glycosidase family. As to quaternary structure, homotrimer. It depends on Mn(2+) as a cofactor.

It catalyses the reaction D-ribose 5-phosphate + uracil = psi-UMP + H2O. Functionally, catalyzes the reversible cleavage of pseudouridine 5'-phosphate (PsiMP) to ribose 5-phosphate and uracil. Functions biologically in the cleavage direction, as part of a pseudouridine degradation pathway. This Geobacillus kaustophilus (strain HTA426) protein is Pseudouridine-5'-phosphate glycosidase.